Consider the following 353-residue polypeptide: Putative glycosyltransferase TagX (353 aa).

It belongs to the glycosyltransferase 2 family.

The chain is Putative glycosyltransferase TagX (tagX) from Staphylococcus aureus (strain MSSA476).